Here is a 200-residue protein sequence, read N- to C-terminus: Ribosomal RNA large subunit methyltransferase E (200 aa).

Residues Gly-51, Trp-53, Asp-71, Asp-90, and Asp-112 each coordinate S-adenosyl-L-methionine. The Proton acceptor role is filled by Lys-151.

This sequence belongs to the class I-like SAM-binding methyltransferase superfamily. RNA methyltransferase RlmE family.

Its subcellular location is the cytoplasm. It catalyses the reaction uridine(2552) in 23S rRNA + S-adenosyl-L-methionine = 2'-O-methyluridine(2552) in 23S rRNA + S-adenosyl-L-homocysteine + H(+). Functionally, specifically methylates the uridine in position 2552 of 23S rRNA at the 2'-O position of the ribose in the fully assembled 50S ribosomal subunit. In Treponema pallidum (strain Nichols), this protein is Ribosomal RNA large subunit methyltransferase E.